We begin with the raw amino-acid sequence, 346 residues long: Methylthioribose-1-phosphate isomerase (346 aa).

Substrate-binding positions include 48–50, arginine 91, and glutamine 196; that span reads RGA. Aspartate 237 functions as the Proton donor in the catalytic mechanism. 247-248 is a binding site for substrate; sequence NK.

This sequence belongs to the eIF-2B alpha/beta/delta subunits family. MtnA subfamily.

It carries out the reaction 5-(methylsulfanyl)-alpha-D-ribose 1-phosphate = 5-(methylsulfanyl)-D-ribulose 1-phosphate. It functions in the pathway amino-acid biosynthesis; L-methionine biosynthesis via salvage pathway; L-methionine from S-methyl-5-thio-alpha-D-ribose 1-phosphate: step 1/6. In terms of biological role, catalyzes the interconversion of methylthioribose-1-phosphate (MTR-1-P) into methylthioribulose-1-phosphate (MTRu-1-P). This is Methylthioribose-1-phosphate isomerase from Thermosipho africanus (strain TCF52B).